Consider the following 134-residue polypeptide: uncharacterized protein (134 aa).

2 helical membrane-spanning segments follow: residues 16-36 and 43-63; these read IFSF…NTKL and IAYF…IHGT.

It belongs to the plectrovirus ORF5 family.

It localises to the host membrane. This is an uncharacterized protein from Spiroplasma citri (SpV1).